The following is a 388-amino-acid chain: Probable proton-coupled zinc antiporter SLC30A3 (388 aa).

Residues 1-46 (MEPSPAAGGLETTRLVSPRDRGGAGGSLRLKSLFTEPSEPLPEESK) are disordered. The Cytoplasmic segment spans residues 1–75 (MEPSPAAGGL…TPERLHARRQ (75 aa)). Residues 76-96 (LYAACAVCFVFMAGEVVGGYL) form a helical membrane-spanning segment. Over 97-105 (AHSLAIMTD) the chain is Lumenal. The helical transmembrane segment at 106–126 (AAHLLADVGSMMGSLFSLWLS) threads the bilayer. Zn(2+)-binding residues include histidine 108 and aspartate 112. Over 127 to 145 (TRPATRTMTFGWHRSETLG) the chain is Cytoplasmic. The helical transmembrane segment at 146-166 (ALASVVSLWMVTGILLYLAFV) threads the bilayer. Topologically, residues 167–177 (RLLHSDYHIEG) are lumenal. The helical transmembrane segment at 178–198 (GAMLLTASIAVCANLLMAFVL) threads the bilayer. The Cytoplasmic portion of the chain corresponds to 199–235 (HQAGPPHSHGSRGAEYAPLEEGPEEPLPLGNTSVRAA). A helical membrane pass occupies residues 236 to 256 (FVHVLGDLLQSFGVLAASILI). 2 residues coordinate Zn(2+): histidine 238 and aspartate 242. Residues 257–264 (YFKPQYKA) are Lumenal-facing. Residues 265–285 (ADPISTFLFSICALGSTAPTL) traverse the membrane as a helical segment. Residues 286–388 (RDVLRILMEG…CLRCQEPPQA (103 aa)) lie on the Cytoplasmic side of the membrane. Tyrosine 357 is covalently cross-linked (Dityrosine (Tyr-Tyr) (interchain with Y-372)). Tyrosine 372 is covalently cross-linked (Dityrosine (Tyr-Tyr) (interchain with Y-357)).

This sequence belongs to the cation diffusion facilitator (CDF) transporter (TC 2.A.4) family. SLC30A subfamily. In terms of assembly, homodimer; dityrosine-linked. Homodimerization seems specific of the human protein and enhances the zinc transport efficiency. Interacts with TMEM163. Homodimerization through dityrosine bonds is stimulated by oxidative stress.

The protein localises to the cytoplasmic vesicle. It localises to the secretory vesicle. The protein resides in the synaptic vesicle membrane. It is found in the synapse. Its subcellular location is the synaptosome. The protein localises to the late endosome membrane. It localises to the lysosome membrane. It catalyses the reaction Zn(2+)(in) + 2 H(+)(out) = Zn(2+)(out) + 2 H(+)(in). Its function is as follows. Probable proton-coupled zinc ion antiporter mediating the import of zinc from cytoplasm into synaptic vesicles and participating to cellular zinc ion homeostasis in the brain. The sequence is that of Probable proton-coupled zinc antiporter SLC30A3 from Homo sapiens (Human).